Reading from the N-terminus, the 271-residue chain is tRNA (guanine-N(1)-)-methyltransferase (271 aa).

Residues Gly120 and Ile145–Leu150 each bind S-adenosyl-L-methionine.

Belongs to the RNA methyltransferase TrmD family. Homodimer.

The protein resides in the cytoplasm. It catalyses the reaction guanosine(37) in tRNA + S-adenosyl-L-methionine = N(1)-methylguanosine(37) in tRNA + S-adenosyl-L-homocysteine + H(+). In terms of biological role, specifically methylates guanosine-37 in various tRNAs. This is tRNA (guanine-N(1)-)-methyltransferase from Bifidobacterium longum subsp. infantis (strain ATCC 15697 / DSM 20088 / JCM 1222 / NCTC 11817 / S12).